A 424-amino-acid polypeptide reads, in one-letter code: Interleukin-13 receptor subunit alpha-1 (424 aa).

Residues 1–25 (MARPALLGELLVLLLWTATVGQVAA) form the signal peptide. Residues 26–340 (ATEVQPPVTN…QSIGKEQNST (315 aa)) lie on the Extracellular side of the membrane. Positions 32 to 121 (PVTNLSVSVE…VKKCISPPEG (90 aa)) constitute a Fibronectin type-III 1 domain. N-linked (GlcNAc...) asparagine glycans are attached at residues Asn35, Asn59, Asn103, and Asn136. Cysteines 44 and 93 form a disulfide. Disulfide bonds link Cys132–Cys142 and Cys171–Cys183. Residues 224-336 (KPDPPHIKHL…WSEAQSIGKE (113 aa)) form the Fibronectin type-III 2 domain. Residue Asn262 is glycosylated (N-linked (GlcNAc...) asparagine). Positions 324-328 (WSDWS) match the WSXWS motif motif. The N-linked (GlcNAc...) asparagine glycan is linked to Asn338. The chain crosses the membrane as a helical span at residues 341–364 (FYTTMLLTIPVFVAVAVIILLFYL). The Cytoplasmic segment spans residues 365–424 (KRLKIIIFPPIPDPGKIFKEMFGDQNDDTLHWKKYDIYEKQSKEETDSVVLIENLKKAAP). The Box 1 motif signature appears at 371-379 (IFPPIPDPG).

Belongs to the type I cytokine receptor family. Type 5 subfamily. Interleukin-13 receptor is a complex of IL4R, IL13RA1, and possibly other components. Interacts with TRAF3IP1. Interacts with IL4. Spleen, liver, thymus, heart, lung, kidney, testis, stomach, brain, skin, and colon; but not skeletal muscle.

It localises to the membrane. Its function is as follows. Binds with low affinity to interleukin-13 (IL13). Together with IL4RA can form a functional receptor for IL13. Also serves as an alternate accessory protein to the common cytokine receptor gamma chain for interleukin-4 (IL4) signaling, but cannot replace the function of IL2RG in allowing enhanced interleukin-2 (IL2) binding activity. The protein is Interleukin-13 receptor subunit alpha-1 (Il13ra1) of Mus musculus (Mouse).